Reading from the N-terminus, the 144-residue chain is SsrA-binding protein (144 aa).

This sequence belongs to the SmpB family.

Its subcellular location is the cytoplasm. Functionally, required for rescue of stalled ribosomes mediated by trans-translation. Binds to transfer-messenger RNA (tmRNA), required for stable association of tmRNA with ribosomes. tmRNA and SmpB together mimic tRNA shape, replacing the anticodon stem-loop with SmpB. tmRNA is encoded by the ssrA gene; the 2 termini fold to resemble tRNA(Ala) and it encodes a 'tag peptide', a short internal open reading frame. During trans-translation Ala-aminoacylated tmRNA acts like a tRNA, entering the A-site of stalled ribosomes, displacing the stalled mRNA. The ribosome then switches to translate the ORF on the tmRNA; the nascent peptide is terminated with the 'tag peptide' encoded by the tmRNA and targeted for degradation. The ribosome is freed to recommence translation, which seems to be the essential function of trans-translation. This is SsrA-binding protein from Thermus thermophilus (strain ATCC BAA-163 / DSM 7039 / HB27).